Here is a 372-residue protein sequence, read N- to C-terminus: Glutamate 5-kinase (372 aa).

Lysine 14 serves as a coordination point for ATP. Residues serine 54, aspartate 141, and asparagine 153 each coordinate substrate. 173 to 174 (TD) contributes to the ATP binding site. One can recognise a PUA domain in the interval 280-358 (RGTLVLDDGA…DAIEALLGYV (79 aa)).

It belongs to the glutamate 5-kinase family.

The protein localises to the cytoplasm. It carries out the reaction L-glutamate + ATP = L-glutamyl 5-phosphate + ADP. It functions in the pathway amino-acid biosynthesis; L-proline biosynthesis; L-glutamate 5-semialdehyde from L-glutamate: step 1/2. Its function is as follows. Catalyzes the transfer of a phosphate group to glutamate to form L-glutamate 5-phosphate. The chain is Glutamate 5-kinase from Pseudomonas aeruginosa (strain UCBPP-PA14).